The chain runs to 675 residues: DNA ligase (675 aa).

NAD(+) contacts are provided by residues 35-39 (DEAYD), 84-85 (SL), and E116. Residue K118 is the N6-AMP-lysine intermediate of the active site. NAD(+) is bound by residues R139, E180, K296, and K320. Positions 414, 417, 432, and 437 each coordinate Zn(2+). Residues 597–675 (PVDAFWNGKT…EREFLERLGM (79 aa)) form the BRCT domain.

This sequence belongs to the NAD-dependent DNA ligase family. LigA subfamily. The cofactor is Mg(2+). It depends on Mn(2+) as a cofactor.

It carries out the reaction NAD(+) + (deoxyribonucleotide)n-3'-hydroxyl + 5'-phospho-(deoxyribonucleotide)m = (deoxyribonucleotide)n+m + AMP + beta-nicotinamide D-nucleotide.. Functionally, DNA ligase that catalyzes the formation of phosphodiester linkages between 5'-phosphoryl and 3'-hydroxyl groups in double-stranded DNA using NAD as a coenzyme and as the energy source for the reaction. It is essential for DNA replication and repair of damaged DNA. This is DNA ligase from Syntrophobacter fumaroxidans (strain DSM 10017 / MPOB).